The primary structure comprises 289 residues: MVVVTGREPDSRRPDGAMSSSDAEDDFLEPATPTATQAGHSLPLLPQEFPEVVPLNIGGAHFTTRLSTLRRYEDTMLAAMFSGRHYIPTDAEGRYFIDRDGAHFGDVLNFLRSGDLPPRERVRAVYKEAQYYAIGPLLEQLENMQPLKGEKVRQAFLGLMPYYKDHLERIVEIARLRAVQRKARFAKLKVCVFKEEMPITPYECPLLNSLRFERSESDGQLFEHHCEVDVSFGPWEAVADVYDLLHCLVTDLSAQGLTVDHQCIGVCDKHLINHYYCKRPIYEFKITWW.

The interval 1–40 (MVVVTGREPDSRRPDGAMSSSDAEDDFLEPATPTATQAGH) is disordered. The BTB domain occupies 53–141 (VPLNIGGAHF…YAIGPLLEQL (89 aa)).

As to quaternary structure, interacts with CUL3.

The protein resides in the cell membrane. The protein localises to the cytoplasm. It localises to the cytosol. Functionally, may be involved in the control of excitability of cortical neurons. In Bos taurus (Bovine), this protein is BTB/POZ domain-containing protein KCTD7 (KCTD7).